Consider the following 117-residue polypeptide: Immunoglobulin heavy variable 3-74 (117 aa).

An N-terminal signal peptide occupies residues 1–19 (MEFGLSWVFLVAILKGVQC). The interval 20-44 (EVQLVESGGGLVQPGGSLRLSCAAS) is framework-1. The 98-residue stretch at 20 to 117 (EVQLVESGGG…EDTAVYYCAR (98 aa)) folds into the Ig-like domain. Residues Cys-41 and Cys-115 are joined by a disulfide bond. Residues 45-52 (GFTFSSYW) are complementarity-determining-1. The interval 53 to 69 (MHWVRQAPGKGLVWVSR) is framework-2. The complementarity-determining-2 stretch occupies residues 70 to 77 (INSDGSST). The segment at 78–115 (SYADSVKGRFTISRDNAKNTLYLQMNSLRAEDTAVYYC) is framework-3. Residues 116 to 117 (AR) form a complementarity-determining-3 region.

As to quaternary structure, immunoglobulins are composed of two identical heavy chains and two identical light chains; disulfide-linked.

Its subcellular location is the secreted. The protein resides in the cell membrane. V region of the variable domain of immunoglobulin heavy chains that participates in the antigen recognition. Immunoglobulins, also known as antibodies, are membrane-bound or secreted glycoproteins produced by B lymphocytes. In the recognition phase of humoral immunity, the membrane-bound immunoglobulins serve as receptors which, upon binding of a specific antigen, trigger the clonal expansion and differentiation of B lymphocytes into immunoglobulins-secreting plasma cells. Secreted immunoglobulins mediate the effector phase of humoral immunity, which results in the elimination of bound antigens. The antigen binding site is formed by the variable domain of one heavy chain, together with that of its associated light chain. Thus, each immunoglobulin has two antigen binding sites with remarkable affinity for a particular antigen. The variable domains are assembled by a process called V-(D)-J rearrangement and can then be subjected to somatic hypermutations which, after exposure to antigen and selection, allow affinity maturation for a particular antigen. The polypeptide is Immunoglobulin heavy variable 3-74 (Homo sapiens (Human)).